A 198-amino-acid chain; its full sequence is Protein GrpE (198 aa).

Positions 1–21 are enriched in basic and acidic residues; that stretch reads MMKKAEDPLQDREGTIQEHTE. The segment at 1–56 is disordered; sequence MMKKAEDPLQDREGTIQEHTEGQAGTAAADQSAAVETPESRIAGLEREVQAEKEQN. The span at 22–34 shows a compositional bias: low complexity; that stretch reads GQAGTAAADQSAA. Positions 44–56 are enriched in basic and acidic residues; the sequence is GLEREVQAEKEQN.

The protein belongs to the GrpE family. As to quaternary structure, homodimer.

The protein resides in the cytoplasm. In terms of biological role, participates actively in the response to hyperosmotic and heat shock by preventing the aggregation of stress-denatured proteins, in association with DnaK and GrpE. It is the nucleotide exchange factor for DnaK and may function as a thermosensor. Unfolded proteins bind initially to DnaJ; upon interaction with the DnaJ-bound protein, DnaK hydrolyzes its bound ATP, resulting in the formation of a stable complex. GrpE releases ADP from DnaK; ATP binding to DnaK triggers the release of the substrate protein, thus completing the reaction cycle. Several rounds of ATP-dependent interactions between DnaJ, DnaK and GrpE are required for fully efficient folding. This chain is Protein GrpE, found in Chlorobium luteolum (strain DSM 273 / BCRC 81028 / 2530) (Pelodictyon luteolum).